A 66-amino-acid chain; its full sequence is U1-theraphotoxin-Cg1b (66 aa).

The signal sequence occupies residues 1-21 (MKTSALFVIFGLVLLFCNSFA). Residues 22 to 29 (AELKTTGR) constitute a propeptide that is removed on maturation. Disulfide bonds link Cys31–Cys46, Cys38–Cys51, and Cys45–Cys58.

Belongs to the neurotoxin 10 (Hwtx-1) family. 46 (Jztx-7/10/12) subfamily. Expressed by the venom gland.

Its subcellular location is the secreted. In terms of biological role, probable ion channel inhibitor. The chain is U1-theraphotoxin-Cg1b from Chilobrachys guangxiensis (Chinese earth tiger tarantula).